Consider the following 509-residue polypeptide: Putative thymidine phosphorylase (509 aa).

This sequence belongs to the thymidine/pyrimidine-nucleoside phosphorylase family. Type 2 subfamily.

It catalyses the reaction thymidine + phosphate = 2-deoxy-alpha-D-ribose 1-phosphate + thymine. This is Putative thymidine phosphorylase from Bradyrhizobium sp. (strain ORS 278).